A 694-amino-acid polypeptide reads, in one-letter code: Elongation factor G (694 aa).

One can recognise a tr-type G domain in the interval 9 to 288 (DAIRNIGIMA…VIVKWLPSPL (280 aa)). GTP contacts are provided by residues 18–25 (AHIDAGKT), 82–86 (DTPGH), and 136–139 (NKMD).

The protein belongs to the TRAFAC class translation factor GTPase superfamily. Classic translation factor GTPase family. EF-G/EF-2 subfamily.

Its subcellular location is the cytoplasm. In terms of biological role, catalyzes the GTP-dependent ribosomal translocation step during translation elongation. During this step, the ribosome changes from the pre-translocational (PRE) to the post-translocational (POST) state as the newly formed A-site-bound peptidyl-tRNA and P-site-bound deacylated tRNA move to the P and E sites, respectively. Catalyzes the coordinated movement of the two tRNA molecules, the mRNA and conformational changes in the ribosome. This Chlamydia trachomatis serovar L2 (strain ATCC VR-902B / DSM 19102 / 434/Bu) protein is Elongation factor G.